The following is a 199-amino-acid chain: Superoxide dismutase [Fe] (199 aa).

Fe cation-binding residues include His-28, His-80, Asp-162, and His-166.

Belongs to the iron/manganese superoxide dismutase family. In terms of assembly, homodimer. The cofactor is Fe cation.

The protein localises to the cytoplasm. The enzyme catalyses 2 superoxide + 2 H(+) = H2O2 + O2. Destroys superoxide anion radicals which are normally produced within the cells and which are toxic to biological systems. In Leptolyngbya boryana (Plectonema boryanum), this protein is Superoxide dismutase [Fe] (sodB).